We begin with the raw amino-acid sequence, 875 residues long: ATP-dependent helicase Lhr-Core (875 aa).

8 residues coordinate ATP: Gln35, Lys58, Thr59, Asp173, Glu174, Ile355, Arg372, and His375. In terms of domain architecture, Helicase ATP-binding spans 39-230 (IPLIKQNYNV…FLVGKDREYR (192 aa)). A DEIH box motif is present at residues 173–176 (DEIH). The 173-residue stretch at 247 to 419 (PVKDLVHSSE…SIHIPKNPLD (173 aa)) folds into the Helicase C-terminal domain. Residues 420-506 (VLSQIIVSAS…IFYTNSGTIP (87 aa)) are WH domain. The tract at residues 507-875 (DEAMISVVTE…VNIELEYTSV (369 aa)) is domain 4.

This sequence belongs to the Lhr helicase family. Lhr-Core subfamily. As to quaternary structure, monomer and homodimer. The monomeric form has helicase, ATPase and strand annealing activities, while the dimeric form only has ATPAse and strand annealing activities. Interacts with DNA topoisomerase 3 (topA).

The enzyme catalyses Couples ATP hydrolysis with the unwinding of duplex DNA by translocating in the 3'-5' direction.. It carries out the reaction ATP + H2O = ADP + phosphate + H(+). Its activity is regulated as follows. DNA topoisomerase 3 (topA) inhibits helicase activity on Holliday junctions (HJ) but has no effect on ATPase activity. In terms of biological role, DNA helicase that translocates in a 3'-5' direction on single-stranded (ss)DNA, probably involved in DNA repair. Unwinds DNA in a 3'-5' direction, unwinding is ATP-dependent, acts preferentially on fork and 3'-tailed DNA; bubble and blunt-ended double-stranded (ds)DNA are not substrates. Has winding and unwinding activity, unwinds Holliday junction (HJ) DNA in the presence of ATP, the main product is forked DNA, single-stranded binding protein (SSB) does not stimulate activity. Anneals complementary oligonucleotides in an ATP-independent manner to form HJ and fork structures, thus can perform strand exchange. Preferentially binds HJ, forked and ssDNA, dsDNA is bound less well. LhrC-Core (Hel112) inhibits the exonuclease activity of the HerA-NurA complex on ss- and dsDNA, has no effect on ssDNA nicking by NurA; HerA-NurA are involved in DNA end-resection during DNA double-strand break repair. The sequence is that of ATP-dependent helicase Lhr-Core from Saccharolobus solfataricus (strain ATCC 35092 / DSM 1617 / JCM 11322 / P2) (Sulfolobus solfataricus).